The primary structure comprises 310 residues: MIKIYLDEADQSHLTSISKNAATKPEWLRVKAPQFERIGNTASLLSDLKLNTVCQEASCPNIGECFASGTATFLIMGPACTRACPYCDINFDRSKRDLDPTEPHRLAEAVSRMNLKHVVITSVNRDDLDDGGASQFFQCVSEVRKKSPETTIELLIPDLCGNWQALELVLDSKPNVLNHNIETVKSLYRKVRPQGNYQRTLDLLKRTKEYFPSVYTKSGFMLGLGESDDEVLNLLSDLKNHFVDIVTIGQYLSPGPKHLPVQRFVSPPKFTYFKLFGEDNLGFMQVVSSPLTRSSYHAEEIQKLMKKYPR.

Cys-54, Cys-59, Cys-65, Cys-80, Cys-84, Cys-87, and Ser-295 together coordinate [4Fe-4S] cluster. The 219-residue stretch at 66–284 (FASGTATFLI…LFGEDNLGFM (219 aa)) folds into the Radical SAM core domain.

It belongs to the radical SAM superfamily. Lipoyl synthase family. [4Fe-4S] cluster is required as a cofactor.

It localises to the cytoplasm. The enzyme catalyses [[Fe-S] cluster scaffold protein carrying a second [4Fe-4S](2+) cluster] + N(6)-octanoyl-L-lysyl-[protein] + 2 oxidized [2Fe-2S]-[ferredoxin] + 2 S-adenosyl-L-methionine + 4 H(+) = [[Fe-S] cluster scaffold protein] + N(6)-[(R)-dihydrolipoyl]-L-lysyl-[protein] + 4 Fe(3+) + 2 hydrogen sulfide + 2 5'-deoxyadenosine + 2 L-methionine + 2 reduced [2Fe-2S]-[ferredoxin]. The protein operates within protein modification; protein lipoylation via endogenous pathway; protein N(6)-(lipoyl)lysine from octanoyl-[acyl-carrier-protein]: step 2/2. In terms of biological role, catalyzes the radical-mediated insertion of two sulfur atoms into the C-6 and C-8 positions of the octanoyl moiety bound to the lipoyl domains of lipoate-dependent enzymes, thereby converting the octanoylated domains into lipoylated derivatives. This Prochlorococcus marinus (strain MIT 9215) protein is Lipoyl synthase.